Consider the following 230-residue polypeptide: Ribonuclease 3 (230 aa).

In terms of domain architecture, RNase III spans 5–127; the sequence is HEHLARKLGI…ILGAVLRDQG (123 aa). E40 is a binding site for Mg(2+). The active site involves D44. Mg(2+) is bound by residues D113 and E116. The active site involves E116. The DRBM domain maps to 154–224; it reads DPKTRLQELM…AENMLSRLSD (71 aa). The interval 202-230 is disordered; that stretch reads GEGSSRKKAEQQAAENMLSRLSDQSRFRV.

This sequence belongs to the ribonuclease III family. In terms of assembly, homodimer. It depends on Mg(2+) as a cofactor.

The protein resides in the cytoplasm. The catalysed reaction is Endonucleolytic cleavage to 5'-phosphomonoester.. Its function is as follows. Digests double-stranded RNA. Involved in the processing of primary rRNA transcript to yield the immediate precursors to the large and small rRNAs (23S and 16S). Processes some mRNAs, and tRNAs when they are encoded in the rRNA operon. Processes pre-crRNA and tracrRNA of type II CRISPR loci if present in the organism. The protein is Ribonuclease 3 of Methylococcus capsulatus (strain ATCC 33009 / NCIMB 11132 / Bath).